A 184-amino-acid chain; its full sequence is Secreted protein B (184 aa).

The signal sequence occupies residues 1–19 (MRFILVLVLILGLVSSSFG). N-linked (GlcNAc...) asparagine glycosylation is present at N129. The Cell attachment site motif lies at 164–166 (RGD).

This sequence belongs to the Sct family.

Its subcellular location is the secreted. The sequence is that of Secreted protein B (29C) from Dictyostelium discoideum (Social amoeba).